The chain runs to 268 residues: Glucosamine-6-phosphate deaminase (268 aa).

The active-site Proton acceptor; for enolization step is Asp-67. Asn-137 acts as the For ring-opening step in catalysis. Residue His-139 is the Proton acceptor; for ring-opening step of the active site. Glu-144 (for ring-opening step) is an active-site residue.

Belongs to the glucosamine/galactosamine-6-phosphate isomerase family. NagB subfamily. As to quaternary structure, homohexamer.

The catalysed reaction is alpha-D-glucosamine 6-phosphate + H2O = beta-D-fructose 6-phosphate + NH4(+). It participates in amino-sugar metabolism; N-acetylneuraminate degradation; D-fructose 6-phosphate from N-acetylneuraminate: step 5/5. Its function is as follows. Catalyzes the reversible isomerization-deamination of glucosamine 6-phosphate (GlcN6P) to form fructose 6-phosphate (Fru6P) and ammonium ion. The chain is Glucosamine-6-phosphate deaminase from Pseudoalteromonas translucida (strain TAC 125).